A 39-amino-acid polypeptide reads, in one-letter code: Cytochrome b559 subunit beta (39 aa).

A helical membrane pass occupies residues 14–30; it reads WLAIHGLAVPTVFFLGS. His18 contributes to the heme binding site.

This sequence belongs to the PsbE/PsbF family. Heterodimer of an alpha subunit and a beta subunit. PSII is composed of 1 copy each of membrane proteins PsbA, PsbB, PsbC, PsbD, PsbE, PsbF, PsbH, PsbI, PsbJ, PsbK, PsbL, PsbM, PsbT, PsbX, PsbY, PsbZ, Psb30/Ycf12, at least 3 peripheral proteins of the oxygen-evolving complex and a large number of cofactors. It forms dimeric complexes. The cofactor is heme b.

Its subcellular location is the plastid. It localises to the chloroplast thylakoid membrane. In terms of biological role, this b-type cytochrome is tightly associated with the reaction center of photosystem II (PSII). PSII is a light-driven water:plastoquinone oxidoreductase that uses light energy to abstract electrons from H(2)O, generating O(2) and a proton gradient subsequently used for ATP formation. It consists of a core antenna complex that captures photons, and an electron transfer chain that converts photonic excitation into a charge separation. The polypeptide is Cytochrome b559 subunit beta (Psilotum nudum (Whisk fern)).